The primary structure comprises 259 residues: Ovulation prohormone (259 aa).

Residues 1 to 34 (MKMSGLLSKPDYGVVGIVFTVVFCCWCSSSTTHA) form the signal peptide. Residues 35-102 (LSIAEPGRDR…SGEKTRLTAA (68 aa)) constitute a propeptide that is removed on maturation. The tract at residues 42–103 (RDRYDKRSPT…GEKTRLTAAK (62 aa)) is disordered. Repeats lie at residues 119 to 123 (RLRFH) and 146 to 150 (RLRFH). Positions 119-150 (RLRFHKRRVDSADESNDDGFDRKAREPRLRFH) are 2 X 5 AA repeats of R-L-R-F-H. The disordered stretch occupies residues 149 to 197 (FHDVRKRSATAEEGSENAEIEESHLGNSRSRRSAGSAPSSANEVQRSKR). Positions 181 to 195 (SAGSAPSSANEVQRS) are excised as a propeptide. Leucine 233 is modified (leucine amide). The propeptide occupies 237 to 259 (GSAFFDHIPIIFGEPQYDYQPFK).

Belongs to the molluscan ELH family.

It is found in the secreted. Its function is as follows. CDCH induces ovulation and egg-mass production; it may also stimulate synthesis of secretory products in the female accessory sex glands and affect neurons in the neuronal circuits controlling locomotion and feeding. Functionally, calfluxin is involved in the influx of calcium into mitochondria of the albumen gland. CDCA (or alpha-CDCP) triggers the electrical activity of the caudodorsal cells (CDCS). The protein is Ovulation prohormone of Lymnaea stagnalis (Great pond snail).